A 353-amino-acid chain; its full sequence is Peroxisome assembly protein 12-A (353 aa).

Topologically, residues 1 to 19 are peroxisomal matrix; it reads MAERGAHITTTSASDDRPS. Residues 20–47 traverse the membrane as a helical segment; it reads IFEVVAQESLMAAARPALHHIVKVLAES. Residues 48-51 lie on the Cytoplasmic side of the membrane; sequence NPSR. A helical transmembrane segment spans residues 52-76; the sequence is YGTLWRWFDELYTLLDWLLQQHYLS. The Peroxisomal matrix segment spans residues 77 to 104; that stretch reads WASASFSENFYGLKRITLGKEVGQRNLP. The helical transmembrane segment at 105–134 threads the bilayer; that stretch reads RKEYWKSLLLLVLIPYLRVKLEKIVNRLRE. The Cytoplasmic segment spans residues 135–139; that stretch reads EQDYS. A helical membrane pass occupies residues 140–178; the sequence is IQNPTSFHKRCYKAILASYPFVKLGWEAWFLFYQLRYIL. Residues 179 to 243 lie on the Peroxisomal matrix side of the membrane; that stretch reads WNGKNHSPLL…LGAVALSVSS (65 aa). The helical transmembrane segment at 244–271 threads the bilayer; sequence SLSLGVFFLQFLDWWYSAENQETLKSLN. At 272–353 the chain is on the cytoplasmic side; that stretch reads NLPVPPPPIH…HLIKLYTPDG (82 aa). Positions 298, 301, 319, and 322 each coordinate Zn(2+). An RING-type; degenerate zinc finger spans residues 298-337; that stretch reads CPLCRKVRVNDTALGTSGYVFCYRCAYYYVKTHQRCPVSG.

Belongs to the pex2/pex10/pex12 family. In terms of assembly, component of the PEX2-PEX10-PEX12 retrotranslocation channel.

The protein resides in the peroxisome membrane. It functions in the pathway protein modification; protein ubiquitination. Its function is as follows. Component of a retrotranslocation channel required for peroxisome organization by mediating export of the PEX5 receptor from peroxisomes to the cytosol, thereby promoting PEX5 recycling. The retrotranslocation channel is composed of PEX2, PEX10 and PEX12; each subunit contributing transmembrane segments that coassemble into an open channel that specifically allows the passage of PEX5 through the peroxisomal membrane. PEX12 also regulates PEX5 recycling by activating the E3 ubiquitin-protein ligase activity of PEX10. When PEX5 recycling is compromised, PEX12 stimulates PEX10-mediated polyubiquitination of PEX5, leading to its subsequent degradation. In Xenopus laevis (African clawed frog), this protein is Peroxisome assembly protein 12-A.